The chain runs to 74 residues: Progonadoliberin-3 (74 aa).

The N-terminal stretch at 1–15 (VQVVVLALVAQVTLS) is a signal peptide. The residue at position 16 (Gln-16) is a Pyrrolidone carboxylic acid. Gly-25 bears the Glycine amide mark.

It belongs to the GnRH family.

It is found in the secreted. In terms of biological role, stimulates the secretion of gonadotropins. The sequence is that of Progonadoliberin-3 (gnrh3) from Oncorhynchus mykiss (Rainbow trout).